A 160-amino-acid polypeptide reads, in one-letter code: Cytochrome b6-f complex subunit 4 (160 aa).

Transmembrane regions (helical) follow at residues 36 to 56 (LLYI…GLAV), 95 to 115 (LLGV…PFLE), and 131 to 151 (TVFL…ALPI).

It belongs to the cytochrome b family. PetD subfamily. The 4 large subunits of the cytochrome b6-f complex are cytochrome b6, subunit IV (17 kDa polypeptide, petD), cytochrome f and the Rieske protein, while the 4 small subunits are petG, petL, petM and petN. The complex functions as a dimer.

The protein resides in the plastid. It is found in the chloroplast thylakoid membrane. Component of the cytochrome b6-f complex, which mediates electron transfer between photosystem II (PSII) and photosystem I (PSI), cyclic electron flow around PSI, and state transitions. The polypeptide is Cytochrome b6-f complex subunit 4 (Marchantia polymorpha (Common liverwort)).